The following is a 504-amino-acid chain: Cytochrome P450 6B7 (504 aa).

C445 contacts heme.

It belongs to the cytochrome P450 family. Heme serves as cofactor.

It is found in the endoplasmic reticulum membrane. The protein resides in the microsome membrane. It carries out the reaction an organic molecule + reduced [NADPH--hemoprotein reductase] + O2 = an alcohol + oxidized [NADPH--hemoprotein reductase] + H2O + H(+). This chain is Cytochrome P450 6B7 (CYP6B7), found in Helicoverpa armigera (Cotton bollworm).